A 364-amino-acid chain; its full sequence is Aminomethyltransferase (364 aa).

The protein belongs to the GcvT family. As to quaternary structure, the glycine cleavage system is composed of four proteins: P, T, L and H.

It carries out the reaction N(6)-[(R)-S(8)-aminomethyldihydrolipoyl]-L-lysyl-[protein] + (6S)-5,6,7,8-tetrahydrofolate = N(6)-[(R)-dihydrolipoyl]-L-lysyl-[protein] + (6R)-5,10-methylene-5,6,7,8-tetrahydrofolate + NH4(+). The glycine cleavage system catalyzes the degradation of glycine. This chain is Aminomethyltransferase, found in Shewanella halifaxensis (strain HAW-EB4).